Here is a 463-residue protein sequence, read N- to C-terminus: Protoheme IX farnesyltransferase (463 aa).

Positions 1-193 are unknown; that stretch reads MAESRTFTGL…AYFRLMKPRL (193 aa). The next 4 helical transmembrane spans lie at 6–26, 54–74, 89–109, and 115–135; these read TFTGLLAATAVGVYLLVLAGA, LLVAWGHRLVAAAVGLLVVAM, AAIIIGAVLYPVQIALGAIVA, and ALPGAHLALGMGIFGSFVLAL. Residues 144–170 form a disordered region; sequence GSDDETPVKNPTPAPEPAGDDTPDRTP. 9 consecutive transmembrane segments (helical) span residues 193–213, 218–238, 265–285, 286–306, 314–334, 336–356, 387–407, 409–429, and 441–461; these read LMWLLCLVAAAGMALAAGQTL, VLLTLGGGVLSIGASGTFNHV, ALAFGLLLSFASLWLFWQVNA, LVAVLGLTAIVFYSVIYTLVL, TVLGGAAGALPALIGWVAADG, VGLPGVVLAVIIFLWTPAHFY, IVYYLGATLIASGILGVLTPL, WLYAVTSVLLGAVFLWAVVLL, and AFHASNAYLGAVLIAIVVDAL. The tract at residues 194–460 is protoheme IX prenyltransferase; it reads MWLLCLVAAA…AVLIAIVVDA (267 aa).

It in the C-terminal section; belongs to the UbiA prenyltransferase family. Protoheme IX farnesyltransferase subfamily.

Its subcellular location is the cell membrane. The enzyme catalyses heme b + (2E,6E)-farnesyl diphosphate + H2O = Fe(II)-heme o + diphosphate. It participates in porphyrin-containing compound metabolism; heme O biosynthesis; heme O from protoheme: step 1/1. Functionally, converts heme B (protoheme IX) to heme O by substitution of the vinyl group on carbon 2 of heme B porphyrin ring with a hydroxyethyl farnesyl side group. The polypeptide is Protoheme IX farnesyltransferase (ctaB) (Haloarcula marismortui (strain ATCC 43049 / DSM 3752 / JCM 8966 / VKM B-1809) (Halobacterium marismortui)).